The chain runs to 184 residues: MASSSNVNGNLVDELEEAFQSCIHALTKEESATGVDKDEIKLEVDQTTLKFIDLARQMEAFFLQKRFLLSALKPDLLLKEENFDLKQEIARKDELIRKHYEKIESWKNLLSDQQNYNKPIQSLPPDMRGNLTGGVPGGPGMMPGGIGMPMQNSMQVQQMQAQQQQMQMLQAQQMQQQMQSMPIG.

The stretch at leucine 77–serine 105 forms a coiled coil.

The protein belongs to the Mediator complex subunit 28 family. In terms of assembly, component of the Mediator complex.

It localises to the nucleus. Its function is as follows. Component of the Mediator complex, a coactivator involved in the regulated transcription of nearly all RNA polymerase II-dependent genes. Mediator functions as a bridge to convey information from gene-specific regulatory proteins to the basal RNA polymerase II transcription machinery. Mediator is recruited to promoters by direct interactions with regulatory proteins and serves as a scaffold for the assembly of a functional preinitiation complex with RNA polymerase II and the general transcription factors. The sequence is that of Mediator of RNA polymerase II transcription subunit 28 (MED28) from Aedes aegypti (Yellowfever mosquito).